Reading from the N-terminus, the 901-residue chain is Serine/threonine-protein kinase-like protein CR4 (901 aa).

The signal sequence occupies residues 1–22; that stretch reads MDIVPVVALCCCLVLLPSWAYG. 7 repeat units span residues 31 to 66, 70 to 105, 123 to 158, 160 to 193, 201 to 234, 251 to 285, and 290 to 328. The segment at 31 to 328 is 7 X 36 AA repeats; sequence VSYGEDGPVF…PLALPMAVSP (298 aa). N149 and N177 each carry an N-linked (GlcNAc...) asparagine glycan. N280 carries N-linked (GlcNAc...) asparagine glycosylation. Residues 335–389 form a TNFR-Cys repeat; sequence SCSHGYYEYANHGEVGSGSKTCKPANSRLCLPCSVGCPDDSYESSPCNATADRVC. 3 disulfide bridges follow: C336/C364, C367/C381, and C371/C389. Residue N382 is glycosylated (N-linked (GlcNAc...) asparagine). Residues 423-443 form a helical membrane-spanning segment; sequence IFVAEIAFAVILVFSVTAIAC. Positions 504–781 constitute a Protein kinase domain; it reads FSEDSQVGKG…KVTTALERAL (278 aa). ATP is bound by residues 510 to 518 and K532; that span reads VGKGSFSCV. D633 functions as the Proton acceptor in the catalytic mechanism. The segment at 845-901 is disordered; the sequence is VTSSQRRKSSASEADMDGRTTTDGRNVGSSIGDGLRSLEEEISPASPQENLYLQHNF. Over residues 889-901 the composition is skewed to polar residues; the sequence is ASPQENLYLQHNF.

This sequence belongs to the protein kinase superfamily. Ser/Thr protein kinase family. In terms of assembly, homodimer. Autophosphorylated. In terms of tissue distribution, specifically expressed in the epidermal cells of paleas and lemmas.

It is found in the cell membrane. Its subcellular location is the endosome. It localises to the multivesicular body membrane. The catalysed reaction is L-seryl-[protein] + ATP = O-phospho-L-seryl-[protein] + ADP + H(+). It catalyses the reaction L-threonyl-[protein] + ATP = O-phospho-L-threonyl-[protein] + ADP + H(+). Receptor protein kinase. Could play a role in a differentiation signal. Controls formative cell division in meristems. Regulates epidermal cell differentiation in many organs. During floral organogenesis, required to maintain the interlocking of the palea and lemma, and fertility. Triggers culm elongation. In Oryza sativa subsp. japonica (Rice), this protein is Serine/threonine-protein kinase-like protein CR4.